Here is a 126-residue protein sequence, read N- to C-terminus: Histone H2B-alpha (126 aa).

The disordered stretch occupies residues 1-34 (MSAAEKKPASKAPAGKAPRDTMKSADKKRGKNRK). N6-acetyllysine; alternate is present on residues K6 and K7. Residues K6 and K7 each participate in a glycyl lysine isopeptide (Lys-Gly) (interchain with G-Cter in SUMO); alternate cross-link. A Phosphoserine modification is found at S10. Position 11 is an N6-acetyllysine (K11). Positions 17–27 (APRDTMKSADK) are enriched in basic and acidic residues. Residue K120 forms a Glycyl lysine isopeptide (Lys-Gly) (interchain with G-Cter in ubiquitin) linkage.

It belongs to the histone H2B family. In terms of assembly, the nucleosome is a histone octamer containing two molecules each of H2A, H2B, H3 and H4 assembled in one H3-H4 heterotetramer and two H2A-H2B heterodimers. The octamer wraps approximately 147 bp of DNA. Interacts with rik1. Monoubiquitinated by the rhp6/ubc2-bre1 complex to form H2BK123ub1. H2BK123ub1 gives a specific tag for epigenetic transcriptional activation and is also prerequisite for H3K4me and H3K79me formation. H2BK123ub1 also modulates the formation of double-strand breaks during meiosis and is a prerequisite for DNA-damage checkpoint activation. In terms of processing, phosphorylated by shk1 to form H2BS10ph during progression through meiotic prophase. May be correlated with chromosome condensation. Post-translationally, acetylation of N-terminal lysines and particularly formation of H2BK11ac has a positive effect on transcription. Sumoylation to form H2BK6su or H2BK7su occurs preferentially near the telomeres and represses gene transcription.

The protein resides in the nucleus. It is found in the chromosome. Core component of nucleosome. Nucleosomes wrap and compact DNA into chromatin, limiting DNA accessibility to the cellular machineries which require DNA as a template. Histones thereby play a central role in transcription regulation, DNA repair, DNA replication and chromosomal stability. DNA accessibility is regulated via a complex set of post-translational modifications of histones, also called histone code, and nucleosome remodeling. The protein is Histone H2B-alpha (htb1) of Schizosaccharomyces pombe (strain 972 / ATCC 24843) (Fission yeast).